Consider the following 828-residue polypeptide: Periplasmic nitrate reductase (828 aa).

The tat-type signal signal peptide spans 1–31; the sequence is MKLSRRSFMKANAVAAAAAAAGLSVPGVARA. The region spanning 39 to 95 is the 4Fe-4S Mo/W bis-MGD-type domain; that stretch reads IKWDKAPCRFCGTGCGVLVGTQQGRVVACQGDPDAPVNRGLNCIKGYFLPKIMYGKD. Residues Cys46, Cys49, Cys53, and Cys81 each contribute to the [4Fe-4S] cluster site. Mo-bis(molybdopterin guanine dinucleotide)-binding positions include Lys83, Gln150, Asn175, Cys179, 212-219, 243-247, 262-264, Met372, Gln376, Asn482, 508-509, Lys531, Asp558, and 718-727; these read WGANMAEM, STYQH, QSD, SD, and TGRVLEHWHT. Position 794 (Phe794) interacts with substrate. 2 residues coordinate Mo-bis(molybdopterin guanine dinucleotide): Asn802 and Lys819.

The protein belongs to the prokaryotic molybdopterin-containing oxidoreductase family. NasA/NapA/NarB subfamily. In terms of assembly, component of the periplasmic nitrate reductase NapAB complex composed of NapA and NapB. It depends on [4Fe-4S] cluster as a cofactor. Mo-bis(molybdopterin guanine dinucleotide) serves as cofactor. In terms of processing, predicted to be exported by the Tat system. The position of the signal peptide cleavage has not been experimentally proven.

Its subcellular location is the periplasm. It catalyses the reaction 2 Fe(II)-[cytochrome] + nitrate + 2 H(+) = 2 Fe(III)-[cytochrome] + nitrite + H2O. Catalytic subunit of the periplasmic nitrate reductase complex NapAB. Receives electrons from NapB and catalyzes the reduction of nitrate to nitrite. This Shigella boydii serotype 18 (strain CDC 3083-94 / BS512) protein is Periplasmic nitrate reductase.